A 514-amino-acid polypeptide reads, in one-letter code: Maturase K (514 aa).

This sequence belongs to the intron maturase 2 family. MatK subfamily.

Its subcellular location is the plastid. The protein resides in the chloroplast. Its function is as follows. Usually encoded in the trnK tRNA gene intron. Probably assists in splicing its own and other chloroplast group II introns. The polypeptide is Maturase K (Lepidozamia peroffskyana (Peroffsky's lepidozamia)).